The sequence spans 388 residues: Chalcone synthase LF3 (388 aa).

Cys164 is a catalytic residue.

Belongs to the thiolase-like superfamily. Chalcone/stilbene synthases family.

The enzyme catalyses (E)-4-coumaroyl-CoA + 3 malonyl-CoA + 3 H(+) = 2',4,4',6'-tetrahydroxychalcone + 3 CO2 + 4 CoA. It functions in the pathway secondary metabolite biosynthesis; flavonoid biosynthesis. Functionally, the primary product of this enzyme is 4,2',4',6'-tetrahydroxychalcone (also termed naringenin-chalcone or chalcone) which can under specific conditions spontaneously isomerize into naringenin. This is Chalcone synthase LF3 (CHS-LF3) from Ipomoea batatas (Sweet potato).